Consider the following 416-residue polypeptide: MDLLIENARLVSMERGEAGYLPTPPARVGIQAGKIAAISAHPVGRDTPQIEALLSPQHYSQTIDLQGQLLTPGLIDCHTHLIYAGNRANEFEMRLNGVPYQEIAKQGGGILSSVKATRAATEEQLIELALPRLDGLLASGVTSVEVKSGYGLTLKDELKMLRAAKALEQERNVKITTTLLAAHALPPEFEGRADDYIEHVCQEIIPIVAEENLATSVDVFCESIGFNLEQTEKVFATAKLYGLHVKGHTEQLSNLGGTELTARYKGLSADHIEYLDEDGVVALSKSDTVATLLPGAFYFLRETQLPPIELLRKYHVPMAIATDVNPGTSPFSDLTLMMNMACTLFRLTPQEALRGVTQHAATALGYTNSRGVIKTGFDADLAIWDIEHPADLSYQVGAKRLVGRIVNGEYVSHGGF.

Fe(3+) contacts are provided by H78 and H80. Zn(2+)-binding residues include H78 and H80. Positions 87, 150, and 183 each coordinate 4-imidazolone-5-propanoate. Y150 is a binding site for N-formimidoyl-L-glutamate. Residue H248 coordinates Fe(3+). Residue H248 participates in Zn(2+) binding. Q251 contacts 4-imidazolone-5-propanoate. Residue D323 coordinates Fe(3+). Residue D323 coordinates Zn(2+). Residues N325 and G327 each coordinate N-formimidoyl-L-glutamate. T328 is a 4-imidazolone-5-propanoate binding site.

The protein belongs to the metallo-dependent hydrolases superfamily. HutI family. Zn(2+) serves as cofactor. The cofactor is Fe(3+).

It is found in the cytoplasm. It carries out the reaction 4-imidazolone-5-propanoate + H2O = N-formimidoyl-L-glutamate. It functions in the pathway amino-acid degradation; L-histidine degradation into L-glutamate; N-formimidoyl-L-glutamate from L-histidine: step 3/3. Its function is as follows. Catalyzes the hydrolytic cleavage of the carbon-nitrogen bond in imidazolone-5-propanoate to yield N-formimidoyl-L-glutamate. It is the third step in the universal histidine degradation pathway. This Vibrio parahaemolyticus serotype O3:K6 (strain RIMD 2210633) protein is Imidazolonepropionase.